A 139-amino-acid polypeptide reads, in one-letter code: Large-conductance mechanosensitive channel (139 aa).

2 consecutive transmembrane segments (helical) span residues 16–36 (VIDLAVGVIIGAAFGKIVDSL) and 83–103 (GQFINTTIDFLIIAFAIFVAV).

The protein belongs to the MscL family. Homopentamer.

The protein resides in the cell inner membrane. Functionally, channel that opens in response to stretch forces in the membrane lipid bilayer. May participate in the regulation of osmotic pressure changes within the cell. The sequence is that of Large-conductance mechanosensitive channel from Aromatoleum aromaticum (strain DSM 19018 / LMG 30748 / EbN1) (Azoarcus sp. (strain EbN1)).